Reading from the N-terminus, the 400-residue chain is Elongation factor Tu (400 aa).

The tr-type G domain maps to 10–208 (KPHVNVGTIG…AMDNYIPDPQ (199 aa)). The tract at residues 19 to 26 (GHIDHGKS) is G1. GTP is bound at residue 19 to 26 (GHIDHGKS). Ser-26 contributes to the Mg(2+) binding site. Residues 60–64 (GITIN) form a G2 region. The interval 81-84 (DCPG) is G3. Residues 81 to 85 (DCPGH) and 136 to 139 (NKTD) contribute to the GTP site. Positions 136-139 (NKTD) are G4. Positions 174 to 176 (SAL) are G5.

It belongs to the TRAFAC class translation factor GTPase superfamily. Classic translation factor GTPase family. EF-Tu/EF-1A subfamily. As to quaternary structure, monomer.

The protein localises to the cytoplasm. It catalyses the reaction GTP + H2O = GDP + phosphate + H(+). Its function is as follows. GTP hydrolase that promotes the GTP-dependent binding of aminoacyl-tRNA to the A-site of ribosomes during protein biosynthesis. The sequence is that of Elongation factor Tu from Thermotoga neapolitana (strain ATCC 49049 / DSM 4359 / NBRC 107923 / NS-E).